A 230-amino-acid polypeptide reads, in one-letter code: UPF0173 metal-dependent hydrolase SPO2976 (230 aa).

The protein belongs to the UPF0173 family.

In Ruegeria pomeroyi (strain ATCC 700808 / DSM 15171 / DSS-3) (Silicibacter pomeroyi), this protein is UPF0173 metal-dependent hydrolase SPO2976.